The primary structure comprises 371 residues: Proton-coupled zinc antiporter SLC30A2 (371 aa).

The Cytoplasmic segment spans residues 1–69 (MQTMDKQNLL…DPEKQRARRK (69 aa)). Positions 47–50 (HYCH) match the Mitochondrial localization signal motif. Cys49 contributes to the Zn(2+) binding site. Residues 70 to 90 (LYVASAICLVFMIGEIIGGYL) traverse the membrane as a helical segment. Topologically, residues 91-99 (AQSLAIMTD) are lumenal. Residues 100–120 (AAHLLTDFASMLISLFALWVS) form a helical membrane-spanning segment. Positions 102 and 106 each coordinate Zn(2+). The Cytoplasmic segment spans residues 121 to 136 (SRPATKTMNFGWHRAE). The helical transmembrane segment at 137–157 (ILGALLSVLSIWVVTGVLVYL) threads the bilayer. Topologically, residues 158–172 (AVQRLISGDYEIKGD) are lumenal. A helical membrane pass occupies residues 173–193 (TMLITSGCAVAVNLIMGLALH). The Cytoplasmic portion of the chain corresponds to 194-219 (QSGHGHSHGNSRDDSSQQQNPSVRAA). Residues 220–240 (FIHVIGDLLQSVGVLVAAYII) traverse the membrane as a helical segment. 2 residues coordinate Zn(2+): His222 and Asp226. At 241–248 (YFKPEYKY) the chain is on the lumenal side. Residues 249–269 (VDPICTFLFSILVLGTTLTIL) form a helical membrane-spanning segment. The Cytoplasmic portion of the chain corresponds to 270 to 303 (RDVILVLMEGTPKGVDFTTVKNLLLSVDGVEALH). The Lysosomal targeting motif motif lies at 293–294 (LL). The residue at position 295 (Ser295) is a Phosphoserine. Zn(2+)-binding residues include His303, His320, and Glu354. Residues 304–324 (SLHIWALTVAQPVLSVHIAIA) traverse the membrane as a helical segment. Residues 325–371 (QNADAQAVLKVARDRLQGKFNFHTMTIQIEKYSEDMKNCQACQGPLE) lie on the Lumenal side of the membrane.

Belongs to the cation diffusion facilitator (CDF) transporter (TC 2.A.4) family. SLC30A subfamily. Homodimer. Interacts (via lysosomal targeting motif) with AP3D1; in AP-3-mediated transport to lysosomes. Interacts with TMEM163. Post-translationally, phosphorylated at Ser-295. Phosphorylation at Ser-295 prevents localization to lysosomes. Dephosphorylation of Ser-295 which triggers localization to lysosomes, accumulation of zinc into lysosomes and lysosomal-mediated cell death is induced by TNF-alpha.

Its subcellular location is the cytoplasmic vesicle. The protein resides in the secretory vesicle membrane. The protein localises to the zymogen granule membrane. It is found in the endosome membrane. It localises to the lysosome membrane. Its subcellular location is the mitochondrion inner membrane. The protein resides in the cell membrane. It catalyses the reaction Zn(2+)(in) + 2 H(+)(out) = Zn(2+)(out) + 2 H(+)(in). Functionally, electroneutral proton-coupled antiporter concentrating zinc ions into a variety of intracellular organelles including endosomes, zymogen granules and mitochondria. Thereby, plays a crucial role in cellular zinc homeostasis to confer upon cells protection against its potential cytotoxicity. Regulates the zinc concentration of milk, through the transport of zinc ions into secretory vesicles of mammary cells. By concentrating zinc ions into lysosomes participates to lysosomal-mediated cell death during early mammary gland involution. Its function is as follows. Electroneutral proton-coupled antiporter mediating the efflux of zinc ions through the plasma membrane. This chain is Proton-coupled zinc antiporter SLC30A2, found in Mus musculus (Mouse).